Reading from the N-terminus, the 181-residue chain is ATP synthase subunit delta (181 aa).

It belongs to the ATPase delta chain family. In terms of assembly, F-type ATPases have 2 components, F(1) - the catalytic core - and F(0) - the membrane proton channel. F(1) has five subunits: alpha(3), beta(3), gamma(1), delta(1), epsilon(1). F(0) has three main subunits: a(1), b(2) and c(10-14). The alpha and beta chains form an alternating ring which encloses part of the gamma chain. F(1) is attached to F(0) by a central stalk formed by the gamma and epsilon chains, while a peripheral stalk is formed by the delta and b chains.

The protein resides in the cell inner membrane. Its function is as follows. F(1)F(0) ATP synthase produces ATP from ADP in the presence of a proton or sodium gradient. F-type ATPases consist of two structural domains, F(1) containing the extramembraneous catalytic core and F(0) containing the membrane proton channel, linked together by a central stalk and a peripheral stalk. During catalysis, ATP synthesis in the catalytic domain of F(1) is coupled via a rotary mechanism of the central stalk subunits to proton translocation. This protein is part of the stalk that links CF(0) to CF(1). It either transmits conformational changes from CF(0) to CF(1) or is implicated in proton conduction. This is ATP synthase subunit delta from Hyphomonas neptunium (strain ATCC 15444).